Consider the following 806-residue polypeptide: Sucrose synthase (806 aa).

The segment at 275–752 (MVFNVVILSP…GLQRIEEKYT (478 aa)) is GT-B glycosyltransferase.

Belongs to the glycosyltransferase 1 family. Plant sucrose synthase subfamily.

The enzyme catalyses an NDP-alpha-D-glucose + D-fructose = a ribonucleoside 5'-diphosphate + sucrose + H(+). Sucrose-cleaving enzyme that provides UDP-glucose and fructose for various metabolic pathways. The sequence is that of Sucrose synthase (SUCS) from Vicia faba (Broad bean).